The sequence spans 242 residues: DNA repair protein RecO (242 aa).

This sequence belongs to the RecO family. As to quaternary structure, monomer.

In terms of biological role, involved in DNA repair and RecF pathway recombination. The protein is DNA repair protein RecO of Shigella boydii serotype 18 (strain CDC 3083-94 / BS512).